The following is a 106-amino-acid chain: MVKIRIKTGDKVQVITGKDKGKRGIVIKVLASLSRVIVKGINLARKHVKANKNDVSGGIINKELPIHISNVAYVDSSSNLITKITYTKLDDKRKVRVSKRSGEILQ.

Belongs to the universal ribosomal protein uL24 family. Part of the 50S ribosomal subunit.

One of two assembly initiator proteins, it binds directly to the 5'-end of the 23S rRNA, where it nucleates assembly of the 50S subunit. Functionally, one of the proteins that surrounds the polypeptide exit tunnel on the outside of the subunit. This is Large ribosomal subunit protein uL24 from Orientia tsutsugamushi (strain Boryong) (Rickettsia tsutsugamushi).